Here is an 876-residue protein sequence, read N- to C-terminus: Importin subunit beta-1 (876 aa).

At M1 the chain carries N-acetylmethionine. HEAT repeat units lie at residues 3-29 (LITI…ERAA), 32-62 (NLPT…LQIK), 85-120 (ANAR…ACAE), 129-160 (LIPQ…ICQD), and 170-201 (SNEI…LLNS). S12 carries the post-translational modification Phosphoserine. In terms of domain architecture, Importin N-terminal spans 21-101 (AQKFLERAAV…KNYVLQTLGT (81 aa)). K211 is modified (N6-acetyllysine). HEAT repeat units follow at residues 212–247 (ESER…IMSL), 260–302 (LFAI…EAAE), 314–359 (YAKG…STCC), 363–392 (IVPH…AFGS), 399–438 (PNQL…ICEL), 449–485 (LAPL…YEAA), 500–537 (SSSF…EIVK), 544–592 (YPAV…QNVL), 597–639 (HQDA…VEVL), 644–680 (LKYM…LCRA), 686–724 (LPFC…ALAI), 729–777 (KKYL…QGLK), 785–828 (PDVM…LCTA), and 834–875 (LKLV…LKNQ). The segment at 286-462 (VCDEEMDLAI…LQCLIEGLSA (177 aa)) is essential for high affinity interaction with RPL23A. Positions 329 to 342 (TLTKQDENDDDDDW) are IAB-binding. The tract at residues 334–419 (DENDDDDDWN…MPTLIELMKD (86 aa)) is ran-GTP binding. Residues K835 and K867 each carry the N6-acetyllysine modification.

It belongs to the importin beta family. Importin beta-1 subfamily. In terms of assembly, forms a complex with an importin alpha subunit. Interacts with XPO1. Forms a heterodimer with IPO7. The KPNB1/IPO7 heterodimer interacts with H1 histone. Interacts with SNUPN. Interacts with H2A, H2B, H3 and H4 histones. Component of an import snRNP complex composed of KPNB1, SNUPN, SMN1 and ZNF259. Component of a nuclear export receptor complex composed of KPNB1, Ran, SNUPN and XPO1. Interacts with SRY. Interacts with PRKCI/atypical protein kinase C iota. Interacts with KPNA2. Interacts with KPNA7. Interacts with SNAI1 (via zinc fingers) and SNAI2 (via zinc fingers). Interacts with SLC35G1 and STIM1. Interacts with DCAF8. Interacts with RAN. Interacts with NUMA1 (via C-terminus); this interaction is inhibited by RanGTP. Interacts with ZBED1/hDREF; required for nuclear import of ZBED1/hDREF. Interacts with SRP19. Interacts with RPL23A (via BIB domain), RPS7 and RPL5. Post-translationally, mono-ADP-ribosylated by PARP16.

It localises to the cytoplasm. The protein localises to the nucleus envelope. Functions in nuclear protein import, either in association with an adapter protein, like an importin-alpha subunit, which binds to nuclear localization signals (NLS) in cargo substrates, or by acting as autonomous nuclear transport receptor. Acting autonomously, serves itself as NLS receptor. Docking of the importin/substrate complex to the nuclear pore complex (NPC) is mediated by KPNB1 through binding to nucleoporin FxFG repeats and the complex is subsequently translocated through the pore by an energy requiring, Ran-dependent mechanism. At the nucleoplasmic side of the NPC, Ran binds to importin-beta and the three components separate and importin-alpha and -beta are re-exported from the nucleus to the cytoplasm where GTP hydrolysis releases Ran from importin. The directionality of nuclear import is thought to be conferred by an asymmetric distribution of the GTP- and GDP-bound forms of Ran between the cytoplasm and nucleus. Mediates autonomously the nuclear import of ribosomal proteins RPL23A, RPS7 and RPL5. In association with IPO7, mediates the nuclear import of H1 histone. In vitro, mediates nuclear import of H2A, H2B, H3 and H4 histones. Imports MRTFA, SNAI1 and PRKCI into the nucleus. This chain is Importin subunit beta-1 (Kpnb1), found in Mus musculus (Mouse).